A 188-amino-acid chain; its full sequence is Pyridoxal 5'-phosphate synthase subunit PdxT (188 aa).

47–49 contributes to the L-glutamine binding site; that stretch reads GES. The Nucleophile role is filled by C79. Residues R105 and 134–135 each bind L-glutamine; that span reads IR. Active-site charge relay system residues include H170 and E172.

It belongs to the glutaminase PdxT/SNO family. In terms of assembly, in the presence of PdxS, forms a dodecamer of heterodimers. Only shows activity in the heterodimer.

It catalyses the reaction aldehydo-D-ribose 5-phosphate + D-glyceraldehyde 3-phosphate + L-glutamine = pyridoxal 5'-phosphate + L-glutamate + phosphate + 3 H2O + H(+). It carries out the reaction L-glutamine + H2O = L-glutamate + NH4(+). It functions in the pathway cofactor biosynthesis; pyridoxal 5'-phosphate biosynthesis. In terms of biological role, catalyzes the hydrolysis of glutamine to glutamate and ammonia as part of the biosynthesis of pyridoxal 5'-phosphate. The resulting ammonia molecule is channeled to the active site of PdxS. In Listeria monocytogenes serotype 4b (strain CLIP80459), this protein is Pyridoxal 5'-phosphate synthase subunit PdxT.